We begin with the raw amino-acid sequence, 224 residues long: UPF0758 protein PFLU_5982 (224 aa).

The MPN domain occupies 102-224 (VLESPKAVRD…PLSMAEYGWL (123 aa)). 3 residues coordinate Zn(2+): H173, H175, and D186. Residues 173-186 (HNHPSGSLEPSAAD) carry the JAMM motif motif.

The protein belongs to the UPF0758 family.

This Pseudomonas fluorescens (strain SBW25) protein is UPF0758 protein PFLU_5982.